The following is a 122-amino-acid chain: Large ribosomal subunit protein uL18 (122 aa).

This sequence belongs to the universal ribosomal protein uL18 family. As to quaternary structure, part of the 50S ribosomal subunit; part of the 5S rRNA/L5/L18/L25 subcomplex. Contacts the 5S and 23S rRNAs.

In terms of biological role, this is one of the proteins that bind and probably mediate the attachment of the 5S RNA into the large ribosomal subunit, where it forms part of the central protuberance. The chain is Large ribosomal subunit protein uL18 from Thermotoga petrophila (strain ATCC BAA-488 / DSM 13995 / JCM 10881 / RKU-1).